A 466-amino-acid polypeptide reads, in one-letter code: Fez family zinc finger protein 1 (466 aa).

The Engrailed homology 1 repressor motif lies at 34 to 49; that stretch reads PLAFSIERIMSRTPEP. C2H2-type zinc fingers lie at residues 261-283, 289-311, 317-339, 345-367, 373-395, and 401-424; these read FTCE…MPVH, FVCK…KIIH, HKCN…TRIH, FVCE…KLTH, FKCN…MHTH, and FTCP…RKLH. A disordered region spans residues 446–466; it reads LPNREQSHTIIQSPQLQKSVY. The span at 453–466 shows a compositional bias: polar residues; that stretch reads HTIIQSPQLQKSVY.

Belongs to the krueppel C2H2-type zinc-finger protein family.

It is found in the nucleus. Functionally, transcription repressor. Involved in the development of the forebrain region. The chain is Fez family zinc finger protein 1 (fezf1) from Xenopus laevis (African clawed frog).